Consider the following 131-residue polypeptide: Photosystem II extrinsic protein U (131 aa).

A signal peptide spans 1–28 (MKFISRLLVACSLLIGLMGFLGADLAQA). A propeptide spanning residues 29–36 (LTPNPILA) is cleaved from the precursor.

This sequence belongs to the PsbU family. PSII is composed of 1 copy each of membrane proteins PsbA, PsbB, PsbC, PsbD, PsbE, PsbF, PsbH, PsbI, PsbJ, PsbK, PsbL, PsbM, PsbT, PsbX, PsbY, PsbZ, Psb30/Ycf12, peripheral proteins PsbO, CyanoQ (PsbQ), PsbU, PsbV and a large number of cofactors. It forms dimeric complexes.

The protein localises to the cellular thylakoid membrane. Functionally, one of the extrinsic, lumenal subunits of photosystem II (PSII). PSII is a light-driven water plastoquinone oxidoreductase, using light energy to abstract electrons from H(2)O, generating a proton gradient subsequently used for ATP formation. The extrinsic proteins stabilize the structure of photosystem II oxygen-evolving complex (OEC), the ion environment of oxygen evolution and protect the OEC against heat-induced inactivation. May modulate the Cl(-) requirement for oxygen evolution. The chain is Photosystem II extrinsic protein U from Synechocystis sp. (strain ATCC 27184 / PCC 6803 / Kazusa).